A 171-amino-acid chain; its full sequence is Cation channel sperm-associated auxiliary subunit TMEM249 (171 aa).

At 1-2 (ML) the chain is on the cytoplasmic side. A helical membrane pass occupies residues 3 to 17 (FIICLVFISCNVLRE). Over 18–28 (VKYQETWCFPA) the chain is Extracellular. The chain crosses the membrane as a helical span at residues 29–40 (YGMVIGLWLMLS). Topologically, residues 41–171 (SIPQRRLVLN…TKSSVNDLDV (131 aa)) are cytoplasmic.

In terms of assembly, component of the CatSper complex or CatSpermasome composed of the core pore-forming members CATSPER1, CATSPER2, CATSPER3 and CATSPER4 as well as auxiliary members CATSPERB, CATSPERG2, CATSPERD, CATSPERE, CATSPERZ, C2CD6/CATSPERT, SLCO6C1, TMEM249, TMEM262 and EFCAB9. HSPA1 may be an additional auxiliary complex member. The core complex members CATSPER1, CATSPER2, CATSPER3 and CATSPER4 form a heterotetrameric channel. The auxiliary CATSPERB, CATSPERG2, CATSPERD and CATSPERE subunits form a pavilion-like structure over the pore which stabilizes the complex through interactions with CATSPER4, CATSPER3, CATSPER1 and CATSPER2 respectively. SLCO6C1 interacts with CATSPERE and TMEM262/CATSPERH interacts with CATSPERB, further stabilizing the complex. C2CD6/CATSPERT interacts at least with CATSPERD and is required for targeting the CatSper complex in the flagellar membrane.

The protein resides in the cell projection. It is found in the cilium. The protein localises to the flagellum membrane. Auxiliary component of the CatSper complex, a complex involved in sperm cell hyperactivation. The polypeptide is Cation channel sperm-associated auxiliary subunit TMEM249 (Mus musculus (Mouse)).